The chain runs to 220 residues: Ribosomal RNA large subunit methyltransferase E (220 aa).

S-adenosyl-L-methionine-binding residues include Gly60, Trp62, Asp92, Asp108, and Asp133. The Proton acceptor role is filled by Lys173. The segment at 197–220 (RKPKASRDKSSETFILGRQLKQPR) is disordered.

This sequence belongs to the class I-like SAM-binding methyltransferase superfamily. RNA methyltransferase RlmE family.

The protein localises to the cytoplasm. The catalysed reaction is uridine(2552) in 23S rRNA + S-adenosyl-L-methionine = 2'-O-methyluridine(2552) in 23S rRNA + S-adenosyl-L-homocysteine + H(+). Functionally, specifically methylates the uridine in position 2552 of 23S rRNA at the 2'-O position of the ribose in the fully assembled 50S ribosomal subunit. In Burkholderia ambifaria (strain MC40-6), this protein is Ribosomal RNA large subunit methyltransferase E.